A 102-amino-acid polypeptide reads, in one-letter code: Small ribosomal subunit protein uS10 (102 aa).

Belongs to the universal ribosomal protein uS10 family. As to quaternary structure, part of the 30S ribosomal subunit.

Functionally, involved in the binding of tRNA to the ribosomes. This chain is Small ribosomal subunit protein uS10, found in Roseiflexus castenholzii (strain DSM 13941 / HLO8).